Here is a 236-residue protein sequence, read N- to C-terminus: Purine nucleoside phosphorylase DeoD-type (236 aa).

Residue His5 coordinates a purine D-ribonucleoside. Phosphate-binding positions include Gly21, Arg25, Arg44, and 88–91 (RVGT). A purine D-ribonucleoside-binding positions include 180 to 182 (EME) and 204 to 205 (SD). Residue Asp205 is the Proton donor of the active site.

The protein belongs to the PNP/UDP phosphorylase family. In terms of assembly, homohexamer; trimer of homodimers.

The enzyme catalyses a purine D-ribonucleoside + phosphate = a purine nucleobase + alpha-D-ribose 1-phosphate. It catalyses the reaction a purine 2'-deoxy-D-ribonucleoside + phosphate = a purine nucleobase + 2-deoxy-alpha-D-ribose 1-phosphate. Functionally, catalyzes the reversible phosphorolytic breakdown of the N-glycosidic bond in the beta-(deoxy)ribonucleoside molecules, with the formation of the corresponding free purine bases and pentose-1-phosphate. The chain is Purine nucleoside phosphorylase DeoD-type from Shewanella frigidimarina (strain NCIMB 400).